Here is a 367-residue protein sequence, read N- to C-terminus: NADH-quinone oxidoreductase subunit D (367 aa).

This sequence belongs to the complex I 49 kDa subunit family. As to quaternary structure, NDH-1 is composed of 14 different subunits. Subunits NuoB, C, D, E, F, and G constitute the peripheral sector of the complex.

Its subcellular location is the cell membrane. It catalyses the reaction a quinone + NADH + 5 H(+)(in) = a quinol + NAD(+) + 4 H(+)(out). Functionally, NDH-1 shuttles electrons from NADH, via FMN and iron-sulfur (Fe-S) centers, to quinones in the respiratory chain. The immediate electron acceptor for the enzyme in this species is believed to be ubiquinone. Couples the redox reaction to proton translocation (for every two electrons transferred, four hydrogen ions are translocated across the cytoplasmic membrane), and thus conserves the redox energy in a proton gradient. The sequence is that of NADH-quinone oxidoreductase subunit D from Dehalococcoides mccartyi (strain ATCC BAA-2100 / JCM 16839 / KCTC 5957 / BAV1).